The chain runs to 390 residues: uncharacterized protein (390 aa).

The protein belongs to the glycosyltransferase group 1 family. Glycosyltransferase 4 subfamily.

This is an uncharacterized protein from Methanocaldococcus jannaschii (strain ATCC 43067 / DSM 2661 / JAL-1 / JCM 10045 / NBRC 100440) (Methanococcus jannaschii).